The primary structure comprises 1232 residues: uncharacterized protein (1232 aa).

The protein belongs to the Mg-chelatase subunit H family.

This is an uncharacterized protein from Methanocaldococcus jannaschii (strain ATCC 43067 / DSM 2661 / JAL-1 / JCM 10045 / NBRC 100440) (Methanococcus jannaschii).